A 211-amino-acid polypeptide reads, in one-letter code: NADH-quinone oxidoreductase subunit I (211 aa).

The interval 1-27 (MANTDRPALPHKRAVPPSRADSGPRRR) is disordered. 2 consecutive 4Fe-4S ferredoxin-type domains span residues 71 to 101 (LNRY…VEGA) and 117 to 146 (RVYQ…MTYD). The [4Fe-4S] cluster site is built by C81, C84, C87, C91, C126, C129, C132, and C136.

It belongs to the complex I 23 kDa subunit family. In terms of assembly, NDH-1 is composed of 14 different subunits. Subunits NuoA, H, J, K, L, M, N constitute the membrane sector of the complex. It depends on [4Fe-4S] cluster as a cofactor.

It localises to the cell membrane. It carries out the reaction a quinone + NADH + 5 H(+)(in) = a quinol + NAD(+) + 4 H(+)(out). Functionally, NDH-1 shuttles electrons from NADH, via FMN and iron-sulfur (Fe-S) centers, to quinones in the respiratory chain. The immediate electron acceptor for the enzyme in this species is believed to be menaquinone. Couples the redox reaction to proton translocation (for every two electrons transferred, four hydrogen ions are translocated across the cytoplasmic membrane), and thus conserves the redox energy in a proton gradient. The protein is NADH-quinone oxidoreductase subunit I of Mycobacterium bovis (strain ATCC BAA-935 / AF2122/97).